The chain runs to 418 residues: Tyrosine--tRNA ligase (418 aa).

Tyrosine 38 contributes to the L-tyrosine binding site. The short motif at 43–52 (CTAKSLHVGS) is the 'HIGH' region element. Residues tyrosine 175 and glutamine 179 each contribute to the L-tyrosine site. Positions 235 to 239 (KMGKT) match the 'KMSKS' region motif. Lysine 238 contacts ATP. Residues 348 to 413 (LPIIKLLQMC…CGKKRHLKVM (66 aa)) enclose the S4 RNA-binding domain.

The protein belongs to the class-I aminoacyl-tRNA synthetase family. TyrS type 1 subfamily. In terms of assembly, homodimer.

It is found in the cytoplasm. It catalyses the reaction tRNA(Tyr) + L-tyrosine + ATP = L-tyrosyl-tRNA(Tyr) + AMP + diphosphate + H(+). Its function is as follows. Catalyzes the attachment of tyrosine to tRNA(Tyr) in a two-step reaction: tyrosine is first activated by ATP to form Tyr-AMP and then transferred to the acceptor end of tRNA(Tyr). The polypeptide is Tyrosine--tRNA ligase (Ehrlichia chaffeensis (strain ATCC CRL-10679 / Arkansas)).